Consider the following 239-residue polypeptide: Uridylate kinase (239 aa).

10-13 (KLSG) contacts ATP. Residues 18-23 (GEDGYG) are involved in allosteric activation by GTP. Glycine 52 is a UMP binding site. Residues glycine 53 and arginine 57 each contribute to the ATP site. Residues aspartate 72 and 133-140 (TGNPYFTT) contribute to the UMP site. Residues threonine 160, tyrosine 166, and aspartate 169 each contribute to the ATP site.

This sequence belongs to the UMP kinase family. As to quaternary structure, homohexamer.

It is found in the cytoplasm. The catalysed reaction is UMP + ATP = UDP + ADP. It participates in pyrimidine metabolism; CTP biosynthesis via de novo pathway; UDP from UMP (UMPK route): step 1/1. Allosterically activated by GTP. Inhibited by UTP. Functionally, catalyzes the reversible phosphorylation of UMP to UDP. This Chlorobium chlorochromatii (strain CaD3) protein is Uridylate kinase.